The chain runs to 233 residues: Superoxide dismutase [Mn], mitochondrial (233 aa).

The N-terminal 27 residues, M1–G27, are a transit peptide targeting the mitochondrion. Residues H55, H103, D192, and H196 each coordinate Mn(2+).

The protein belongs to the iron/manganese superoxide dismutase family. Homotetramer. Mn(2+) is required as a cofactor. In terms of tissue distribution, present in all tissues examined (leaf, petiole, root, latex, callus) with young leaves showing the highest levels in intact plants.

It is found in the mitochondrion matrix. The catalysed reaction is 2 superoxide + 2 H(+) = H2O2 + O2. Destroys superoxide anion radicals which are normally produced within the cells and which are toxic to biological systems. The polypeptide is Superoxide dismutase [Mn], mitochondrial (SODA) (Hevea brasiliensis (Para rubber tree)).